A 242-amino-acid polypeptide reads, in one-letter code: Probable transcriptional regulatory protein XOO1543 (242 aa).

It belongs to the TACO1 family.

It localises to the cytoplasm. The polypeptide is Probable transcriptional regulatory protein XOO1543 (Xanthomonas oryzae pv. oryzae (strain MAFF 311018)).